The chain runs to 270 residues: 5-deoxy-glucuronate isomerase (270 aa).

The protein belongs to the isomerase IolB family.

It catalyses the reaction 5-deoxy-D-glucuronate = 5-dehydro-2-deoxy-D-gluconate. It functions in the pathway polyol metabolism; myo-inositol degradation into acetyl-CoA; acetyl-CoA from myo-inositol: step 4/7. Involved in the isomerization of 5-deoxy-glucuronate (5DG) to 5-dehydro-2-deoxy-D-gluconate (DKG or 2-deoxy-5-keto-D-gluconate). The polypeptide is 5-deoxy-glucuronate isomerase (Halalkalibacterium halodurans (strain ATCC BAA-125 / DSM 18197 / FERM 7344 / JCM 9153 / C-125) (Bacillus halodurans)).